A 309-amino-acid polypeptide reads, in one-letter code: MKSRGREMFKVGPIGSQRAYLKNLEWEEKGRNMISSIYVAFDKDTINSIQFSYCQNGGHVVSKKYGMSDAQKQKYGSYNGRFHVMFVFALVTDDHVKTNLCNIQVRLNDDEFVTGLSAIYLCKGITNLNIHTNQGKHGPICDRYSSSKNIMDNYKVEIDVKIRDRREFGGFFGSFDNYGTLTSIGIYVCPITRINDVALRTNYKVTDDYDDQSTFYQSSGPLTTINHNRKLEYQMPHEVSDVKPIVHNPNFEDKISLYQSSDRLARSTNTRTLEYQIPEFLDVNPIGRKSKLKYGIFSKLARLFRNLLD.

Residues 8 to 190 (MFKVGPIGSQ…LTSIGIYVCP (183 aa)) enclose the Jacalin-type lectin domain.

This sequence belongs to the jacalin lectin family.

The protein is Jacalin-related lectin 25 (JAL25) of Arabidopsis thaliana (Mouse-ear cress).